A 72-amino-acid polypeptide reads, in one-letter code: Metallothionein-like protein 1 (72 aa).

The protein belongs to the metallothionein superfamily. Type 15 family.

Metallothioneins have a high content of cysteine residues that bind various heavy metals. This Erythranthe guttata (Yellow monkey flower) protein is Metallothionein-like protein 1.